Consider the following 178-residue polypeptide: ATP synthase subunit delta (178 aa).

Belongs to the ATPase delta chain family. As to quaternary structure, F-type ATPases have 2 components, F(1) - the catalytic core - and F(0) - the membrane proton channel. F(1) has five subunits: alpha(3), beta(3), gamma(1), delta(1), epsilon(1). F(0) has three main subunits: a(1), b(2) and c(10-14). The alpha and beta chains form an alternating ring which encloses part of the gamma chain. F(1) is attached to F(0) by a central stalk formed by the gamma and epsilon chains, while a peripheral stalk is formed by the delta and b chains.

It localises to the cell inner membrane. In terms of biological role, f(1)F(0) ATP synthase produces ATP from ADP in the presence of a proton or sodium gradient. F-type ATPases consist of two structural domains, F(1) containing the extramembraneous catalytic core and F(0) containing the membrane proton channel, linked together by a central stalk and a peripheral stalk. During catalysis, ATP synthesis in the catalytic domain of F(1) is coupled via a rotary mechanism of the central stalk subunits to proton translocation. This protein is part of the stalk that links CF(0) to CF(1). It either transmits conformational changes from CF(0) to CF(1) or is implicated in proton conduction. The sequence is that of ATP synthase subunit delta from Marinomonas sp. (strain MWYL1).